The following is a 302-amino-acid chain: F-box protein At1g20360 (302 aa).

One can recognise an F-box domain in the interval 1–48 (MNSLPLHLLDQILFRLEPKSLAMMKSTNRTINSHISDPLFESEYFSRL).

In Arabidopsis thaliana (Mouse-ear cress), this protein is F-box protein At1g20360.